The chain runs to 445 residues: Inositol-pentakisphosphate 2-kinase IPK1 (445 aa).

ATP-binding positions include 19 to 22 and R40; that span reads GAAN. A substrate-binding site is contributed by R127. ATP contacts are provided by residues 144–146 and 162–164; these read SDH and EIK. The short motif at 162-166 is the EXKPK motif element; sequence EIKAK. The substrate site is built by K166, K196, and N234. R237 is a binding site for ATP. The Zn(2+) site is built by H312, C322, C325, and H341. Position 363 (D363) interacts with substrate. An ATP-binding site is contributed by D402. 3 residues coordinate substrate: K406, K410, and Y414.

It belongs to the IPK1 type 2 family. It depends on Zn(2+) as a cofactor.

It carries out the reaction 1D-myo-inositol 1,3,4,5,6-pentakisphosphate + ATP = 1D-myo-inositol hexakisphosphate + ADP + H(+). In terms of biological role, phosphorylates Ins(1,3,4,5,6)P5 at position 2 to form Ins(1,2,3,4,5,6)P6 (InsP6 or phytate). Phytate is a regulator of intracellular signaling, a highly abundant animal antinutrient, and a phosphate store in plant seeds. Also phosphorylates Ins(1,3,4,6)P4 and Ins(1,4,5,6)P4 to produce Ins(1,2,3,4,6)P5 and Ins(1,2,4,5,6)P5. The sequence is that of Inositol-pentakisphosphate 2-kinase IPK1 from Oryza sativa subsp. indica (Rice).